The sequence spans 145 residues: Mitochondrial import receptor subunit TOM20 homolog (145 aa).

The Mitochondrial intermembrane portion of the chain corresponds to 1–6 (MVGRNS). Residues 7 to 24 (AIAAGVCGALFIGYCIYF) form a helical membrane-spanning segment. At 25 to 145 (DRKRRSDPNF…AQSLAEDDVE (121 aa)) the chain is on the cytoplasmic side. Glycyl lysine isopeptide (Lys-Gly) (interchain with G-Cter in ubiquitin) cross-links involve residues K35, K56, K61, and K68. 2 positions are modified to phosphoserine: S135 and S138.

This sequence belongs to the Tom20 family. In terms of assembly, forms part of the preprotein translocase complex of the outer mitochondrial membrane (TOM complex) which consists of at least 7 different proteins (TOMM5, TOMM6, TOMM7, TOMM20, TOMM22, TOMM40 and TOMM70). Interacts with TOM22. Interacts with APEX1. Interacts with TBC1D21. Upon mitochondrial depolarization, interacts with PINK1; the interaction is required for PINK1-TOM-TIM23 supercomplex formation which is critical for PINK1 stabilization at the outer mitochondrial membrane, kinase activation and downstream mitophagy. Post-translationally, ubiquitinated by PRKN during mitophagy, leading to its degradation and enhancement of mitophagy. Deubiquitinated by USP30.

The protein resides in the mitochondrion outer membrane. Functionally, central component of the receptor complex responsible for the recognition and translocation of cytosolically synthesized mitochondrial preproteins. Together with TOM22 functions as the transit peptide receptor at the surface of the mitochondrion outer membrane and facilitates the movement of preproteins into the TOM40 translocation pore. Required for the translocation across the mitochondrial outer membrane of cytochrome P450 monooxygenases. In Bos taurus (Bovine), this protein is Mitochondrial import receptor subunit TOM20 homolog (TOMM20).